An 860-amino-acid polypeptide reads, in one-letter code: Leucine--tRNA ligase (860 aa).

The short motif at 42–52 (PYPSGRLHMGH) is the 'HIGH' region element. The short motif at 619 to 623 (KMSKS) is the 'KMSKS' region element. Residue K622 coordinates ATP.

The protein belongs to the class-I aminoacyl-tRNA synthetase family.

The protein localises to the cytoplasm. The catalysed reaction is tRNA(Leu) + L-leucine + ATP = L-leucyl-tRNA(Leu) + AMP + diphosphate. The polypeptide is Leucine--tRNA ligase (Escherichia coli (strain SE11)).